Here is a 689-residue protein sequence, read N- to C-terminus: Probable serine/threonine-protein kinase abkC (689 aa).

The segment at 42–79 (NNSGNENYKNFNYNYKNKNNYNNNNNNNNSNSSSNNNG) is disordered. Residues 257 to 689 (WFDEEPMASG…NNKNNNEKNK (433 aa)) form the Protein kinase domain. ATP-binding positions include 263 to 271 (MASGSVAQV) and Lys285. Asp417 serves as the catalytic Proton acceptor. Residues 652-689 (KQLNNDNNNNNNNNNNNKNNNDNNNKNNNNKNNNEKNK) are disordered. The segment covering 655-683 (NNDNNNNNNNNNNNKNNNDNNNKNNNNKN) has biased composition (low complexity).

This sequence belongs to the protein kinase superfamily. ADCK protein kinase family.

The chain is Probable serine/threonine-protein kinase abkC (abkC) from Dictyostelium discoideum (Social amoeba).